The sequence spans 150 residues: Cytosine deaminase (150 aa).

The CMP/dCMP-type deaminase domain maps to 3–121 (FDDKKGLQVA…KLLIENGVEV (119 aa)). Asn44 is a binding site for substrate. A Zn(2+)-binding site is contributed by His55. Catalysis depends on Glu57, which acts as the Proton donor. Positions 84 and 87 each coordinate Zn(2+). Asp147 provides a ligand contact to substrate.

The protein belongs to the cytidine and deoxycytidylate deaminase family. In terms of assembly, homodimer. Zn(2+) is required as a cofactor.

The protein resides in the cytoplasm. Its subcellular location is the nucleus. It catalyses the reaction cytosine + H2O + H(+) = uracil + NH4(+). It participates in pyrimidine metabolism; UMP biosynthesis via salvage pathway; uracil from cytosine: step 1/1. In terms of biological role, catalyzes the hydrolytic deamination of cytosine to uracil or 5-methylcytosine to thymine. Is involved in the pyrimidine salvage pathway, which allows the cell to utilize cytosine for pyrimidine nucleotide synthesis. The polypeptide is Cytosine deaminase (Candida albicans (strain SC5314 / ATCC MYA-2876) (Yeast)).